We begin with the raw amino-acid sequence, 116 residues long: Methionine-R-sulfoxide reductase B1 (116 aa).

The MsrB domain occupies 1–106 (MSFCSFFGGE…FSSSLKFVPK (106 aa)). Residues Cys-23, Cys-26, Cys-71, and Cys-74 each contribute to the Zn(2+) site. Sec-95 functions as the Nucleophile in the catalytic mechanism. A non-standard amino acid (selenocysteine) is located at residue Sec-95.

This sequence belongs to the MsrB Met sulfoxide reductase family. The cofactor is Zn(2+). Post-translationally, truncated MSRB1/SEPX1 proteins produced by failed UGA/Sec decoding are ubiquitinated by the CRL2(FEM1C) E3 ubiquitin-protein ligase complex.

It localises to the cytoplasm. Its subcellular location is the nucleus. It is found in the cytoskeleton. The enzyme catalyses L-methionyl-[protein] + [thioredoxin]-disulfide + H2O = L-methionyl-(R)-S-oxide-[protein] + [thioredoxin]-dithiol. It carries out the reaction [thioredoxin]-disulfide + L-methionine + H2O = L-methionine (R)-S-oxide + [thioredoxin]-dithiol. Functionally, methionine-sulfoxide reductase that specifically reduces methionine (R)-sulfoxide back to methionine. While in many cases, methionine oxidation is the result of random oxidation following oxidative stress, methionine oxidation is also a post-translational modification that takes place on specific residue. Acts as a regulator of actin assembly by reducing methionine (R)-sulfoxide mediated by MICALs (MICAL1, MICAL2 or MICAL3) on actin, thereby promoting filament repolymerization. Plays a role in innate immunity by reducing oxidized actin, leading to actin repolymerization in macrophages. This chain is Methionine-R-sulfoxide reductase B1 (Msrb1), found in Mus musculus (Mouse).